The following is a 125-amino-acid chain: Small ribosomal subunit protein eS8 (125 aa).

The disordered stretch occupies residues 1 to 30; it reads MTIFQGRATRKPSGGKLRPNHSKRRYELGR.

Belongs to the eukaryotic ribosomal protein eS8 family. As to quaternary structure, part of the 30S ribosomal subunit.

This Picrophilus torridus (strain ATCC 700027 / DSM 9790 / JCM 10055 / NBRC 100828 / KAW 2/3) protein is Small ribosomal subunit protein eS8.